A 375-amino-acid chain; its full sequence is CCN family member 1 (375 aa).

The N-terminal stretch at 1–22 (MGSAGARPALAAALLCLARLAL) is a signal peptide. An IGFBP N-terminal domain is found at 23-94 (GSPCPAVCQC…AATNGICRAQ (72 aa)). Cystine bridges form between Cys-26–Cys-50, Cys-30–Cys-52, Cys-32–Cys-53, Cys-39–Cys-56, Cys-64–Cys-78, and Cys-70–Cys-91. The VWFC domain occupies 98 to 164 (RPCEYNSKIY…GQCCEEWVCD (67 aa)). The 46-residue stretch at 223–268 (KCIVQTTSWSQCSKTCGTGISTRVTNDNPDCKLIKETRICEVRPCG) folds into the TSP type-1 domain. The segment at 274-310 (SLKKGKKCTKTKKSPSPVRFTYAGCSSVKKYRPKYCG) is heparin-binding. 5 disulfides stabilise this stretch: Cys-281/Cys-318, Cys-298/Cys-332, Cys-309/Cys-348, Cys-312/Cys-350, and Cys-317/Cys-354. The CTCK domain maps to 281 to 355 (CTKTKKSPSP…QSCRCNYNCP (75 aa)).

Belongs to the CCN family.

The protein resides in the secreted. Functionally, probable secreted regulatory protein. This chain is CCN family member 1 (CCN1), found in Gallus gallus (Chicken).